Consider the following 437-residue polypeptide: MRELTLTTTVFQTTKSQEIFAAAQKLMPGGVSSPVRAFKSVGGQPIVFDHVKGAHIWDVDGNQYIDYVGSWGPAIVGHAHPEVIDALHAALEKGTSFGAPCLLENILAEMVIAAVPSVEMVRFVNSGTEACMAVLRLMRAYTQREKVIKFEGCYHGHADMFLVKAGSGVATLGLPDSPGVPKATTAATLTAPYNDLEAVSRLFEQYPNDIAGVILEPVVGNAGFIPPDAGFLEGLRELTKQYGALLVFDEVMTGFRIAYGGAQEKFGVTPDLTTLGKVIGGGLPVGAYGGRAEIMKMVAPAGPVYQAGTLSGNPLAMTAGIKTLEILSRPGSYEHLDRITGKLVQGLLDAAREFGHEVCGGHISGMFGLFFTAGPVTNYEQAKQSDLKKFAAFHRGMLEQGIYLAPSQFEAGFTSLAHTEADIERTIAAARTVLSQL.

Lys-277 bears the N6-(pyridoxal phosphate)lysine mark.

The protein belongs to the class-III pyridoxal-phosphate-dependent aminotransferase family. HemL subfamily. Homodimer. The cofactor is pyridoxal 5'-phosphate.

Its subcellular location is the cytoplasm. It carries out the reaction (S)-4-amino-5-oxopentanoate = 5-aminolevulinate. The protein operates within porphyrin-containing compound metabolism; protoporphyrin-IX biosynthesis; 5-aminolevulinate from L-glutamyl-tRNA(Glu): step 2/2. Its pathway is porphyrin-containing compound metabolism; chlorophyll biosynthesis. The polypeptide is Glutamate-1-semialdehyde 2,1-aminomutase (Thermosynechococcus vestitus (strain NIES-2133 / IAM M-273 / BP-1)).